Reading from the N-terminus, the 271-residue chain is Tryptophan synthase alpha chain (271 aa).

Active-site proton acceptor residues include glutamate 49 and aspartate 60.

The protein belongs to the TrpA family. In terms of assembly, tetramer of two alpha and two beta chains.

It catalyses the reaction (1S,2R)-1-C-(indol-3-yl)glycerol 3-phosphate + L-serine = D-glyceraldehyde 3-phosphate + L-tryptophan + H2O. Its pathway is amino-acid biosynthesis; L-tryptophan biosynthesis; L-tryptophan from chorismate: step 5/5. Its function is as follows. The alpha subunit is responsible for the aldol cleavage of indoleglycerol phosphate to indole and glyceraldehyde 3-phosphate. The sequence is that of Tryptophan synthase alpha chain from Paraburkholderia phymatum (strain DSM 17167 / CIP 108236 / LMG 21445 / STM815) (Burkholderia phymatum).